Consider the following 614-residue polypeptide: Vitamin B12 transporter BtuB (614 aa).

Residues 1-20 (MIKKASLLTACSVTAFSAWA) form the signal peptide. Positions 26–33 (DTLVVTAN) match the TonB box motif. Residues 38–152 (PRSTVLAPTT…IGGVVNIITT (115 aa)) enclose the TBDR plug domain. Cyanocob(III)alamin contacts are provided by residues L83, S85, N92, and 110–111 (VS). The TBDR beta-barrel domain occupies 155-614 (HPGTEISAGW…EYTLXGSYTF (460 aa)). 3 beta stranded membrane-spanning segments follow: residues 158–165 (TEISAGWG), 169–178 (YQNYDVSTQQ), and 184–195 (TRVTLLGDYAHT). Residues D199, Q211, D213, and D215 each coordinate Ca(2+). A run of 2 beta stranded transmembrane segments spans residues 217-227 (FLSKTLYGALE) and 232-248 (DAWSGFVRGYGYDNRTN). Residues Y249 and D250 each coordinate Ca(2+). A251 contacts cyanocob(III)alamin. D261 serves as a coordination point for Ca(2+). Transmembrane regions (beta stranded) follow at residues 263 to 277 (RKLYSQSWDAGLRYN), 279 to 296 (ELIKSQLITSYSHSKDYN), 309 to 325 (TLDEMKQYTVQWANNII), 328 to 337 (HGNIGAGVDW), 353 to 369 (YDQRNTGIYLTGLQQVG), 371 to 381 (FTFEGAGRSDD), 385 to 400 (FGRHGTWQTSAGWEFI), 403 to 417 (YRFIASYGTSYKAPN), 434 to 443 (KSKQWEGAFE), 449 to 458 (VNWRISGYRN), 473 to 490 (YYNEGKARIKGVEATANF), 494 to 509 (PLTHTVSYDYVDARNA), 517 to 529 (RRAKQQVKYQLDW), and 535 to 550 (DWGITYQYLGTRYDKD). Residue T309 coordinates cyanocob(III)alamin. R517 lines the cyanocob(III)alamin pocket. Y551 provides a ligand contact to cyanocob(III)alamin. 3 beta stranded membrane passes run 558–572 (TVKMGGVSLWDLAVA), 585–596 (IANLFDKDYETV), and 602–614 (AGREYTLXGSYTF). The TonB C-terminal box signature appears at 597-614 (YGYQTAGREYTLXGSYTF).

It belongs to the TonB-dependent receptor family. BtuB (TC 1.B.14.3.1) subfamily.

Its subcellular location is the cell outer membrane. Functionally, involved in the active translocation of vitamin B12 (cyanocobalamin) across the outer membrane to the periplasmic space. It derives its energy for transport by interacting with the trans-periplasmic membrane protein TonB. The protein is Vitamin B12 transporter BtuB of Escherichia coli O6:H1 (strain CFT073 / ATCC 700928 / UPEC).